Consider the following 1297-residue polypeptide: Phosphoribosylformylglycinamidine synthase (1297 aa).

The interval 305–324 (FPGAATGSGGEIRDEGATGR) is disordered. 307–318 (GAATGSGGEIRD) serves as a coordination point for ATP. The Mg(2+) site is built by D679, E718, N722, and D886. ATP is bound at residue S888. The Glutamine amidotransferase type-1 domain maps to 1044–1297 (IAVLREQGVN…LFRNARVFFK (254 aa)). The active-site Nucleophile is the C1137. Residues H1262 and E1264 contribute to the active site.

This sequence in the N-terminal section; belongs to the FGAMS family. Monomer.

Its subcellular location is the cytoplasm. The enzyme catalyses N(2)-formyl-N(1)-(5-phospho-beta-D-ribosyl)glycinamide + L-glutamine + ATP + H2O = 2-formamido-N(1)-(5-O-phospho-beta-D-ribosyl)acetamidine + L-glutamate + ADP + phosphate + H(+). It participates in purine metabolism; IMP biosynthesis via de novo pathway; 5-amino-1-(5-phospho-D-ribosyl)imidazole from N(2)-formyl-N(1)-(5-phospho-D-ribosyl)glycinamide: step 1/2. Its function is as follows. Phosphoribosylformylglycinamidine synthase involved in the purines biosynthetic pathway. Catalyzes the ATP-dependent conversion of formylglycinamide ribonucleotide (FGAR) and glutamine to yield formylglycinamidine ribonucleotide (FGAM) and glutamate. This Mannheimia succiniciproducens (strain KCTC 0769BP / MBEL55E) protein is Phosphoribosylformylglycinamidine synthase.